The sequence spans 448 residues: Trigger factor (448 aa).

The PPIase FKBP-type domain maps to 167 to 253 (GSIVRVDFVE…VKDIKRRDIP (87 aa)).

This sequence belongs to the FKBP-type PPIase family. Tig subfamily.

It localises to the cytoplasm. The catalysed reaction is [protein]-peptidylproline (omega=180) = [protein]-peptidylproline (omega=0). Functionally, involved in protein export. Acts as a chaperone by maintaining the newly synthesized protein in an open conformation. Functions as a peptidyl-prolyl cis-trans isomerase. This chain is Trigger factor, found in Borrelia duttonii (strain Ly).